We begin with the raw amino-acid sequence, 491 residues long: Delayed-rectifier potassium channel regulatory subunit KCNS3 (491 aa).

The Cytoplasmic segment spans residues 1–182; the sequence is MVFGEFFHRP…IRMENPAYCL (182 aa). Residues 183–204 form a helical membrane-spanning segment; that stretch reads SAKLIAISSLSVVLASIVAMCV. Topologically, residues 205-220 are extracellular; the sequence is HSMSEFQNEDGEVDDP. The helical transmembrane segment at 221 to 243 threads the bilayer; the sequence is VLEGVEIACIAWFTGELAVRLAA. At 244–254 the chain is on the cytoplasmic side; sequence APCQKKFWKNP. The helical transmembrane segment at 255 to 275 threads the bilayer; sequence LNIIDFVSIIPFYATLAVDTK. Over 276 to 285 the chain is Extracellular; sequence EEESEDIENM. A helical; Voltage-sensor transmembrane segment spans residues 286–306; sequence GKVVQILRLMRIFRILKLARH. Residues 307-321 lie on the Cytoplasmic side of the membrane; the sequence is SVGLRSLGATLRHSY. Residues 322–343 form a helical membrane-spanning segment; sequence HEVGLLLLFLSVGISIFSVLIY. The Extracellular portion of the chain corresponds to 344–357; sequence SVEKDDHTSSLTSI. An intramembrane region (helical) is located at residues 358-369; it reads PICWWWATISMT. Residues 370 to 375 carry the Selectivity filter motif; the sequence is TVGYGD. The stretch at 370–377 is an intramembrane region; sequence TVGYGDTH. Residues 378–384 lie on the Extracellular side of the membrane; that stretch reads PVTLAGK. A helical membrane pass occupies residues 385–413; that stretch reads LIASTCIICGILVVALPITIIFNKFSKYY. Over 414-491 the chain is Cytoplasmic; that stretch reads QKQKDIDVDQ…TTSLENCTAK (78 aa).

This sequence belongs to the potassium channel family. S (TC 1.A.1.2) subfamily. Kv9.3/KCNS3 sub-subfamily. In terms of assembly, heterotetramer with KCNB1. Does not form homomultimers. As to expression, detected in whole normal term placental and placental chorionic plate arteries and veins. Detected in syncytiotrophoblast and in blood vessel endothelium within intermediate villi and chorionic plate (at protein level). Detected in most tissues, but not in peripheral blood lymphocytes. The highest levels of expression are in lung.

The protein localises to the cell membrane. Potassium channel regulatory subunit that modulates the delayed rectifier potassium channel activity of KCNB1 by namely slowing down the deactivation and inactivation time constants. While it does not form functional channel on its own, it can form functional heterotetrameric channels with KCNB1. This Homo sapiens (Human) protein is Delayed-rectifier potassium channel regulatory subunit KCNS3.